We begin with the raw amino-acid sequence, 176 residues long: MSRVAKAPVAIPAGVEVTLNEQTITVKGTKGSLTRVINADVSVVVENNEIKCSSVEGVKTNAQAGTARALINNMVVGVTAGFEKKLQLIGVGYRAKIAGKGVDLTLGFSHPLVHELPDGVTAVCPSQTEIVLSGTDKQLVGQVAAEIRGYRPPEPYKGKGVRYADEQVRRKEAKKK.

It belongs to the universal ribosomal protein uL6 family. Part of the 50S ribosomal subunit.

In terms of biological role, this protein binds to the 23S rRNA, and is important in its secondary structure. It is located near the subunit interface in the base of the L7/L12 stalk, and near the tRNA binding site of the peptidyltransferase center. The protein is Large ribosomal subunit protein uL6 of Shewanella sediminis (strain HAW-EB3).